The following is a 154-amino-acid chain: Protein X (154 aa).

Residues 68–117 (PCALRFTSARRMETTVNAPWSLPTVLHKRTIGLSGRSMTWIEEYIKDCVF) are mitochondrial targeting sequence.

It belongs to the orthohepadnavirus protein X family. As to quaternary structure, may form homodimer. May interact with host CEBPA, CFLAR, CREB1, DDB1, E4F1, HBXIP, HSPD1/HSP60, NFKBIA, POLR2E and SMAD4. Interacts with host SMC5-SMC6 complex and induces its degradation. Interacts with host TRPC4AP; leading to prevent ubiquitination of TRPC4AP. Interacts with host PLSCR1; this interaction promotes ubiquitination and degradation of HBx and impairs HBx-mediated cell proliferation. A fraction may be phosphorylated in insect cells and HepG2 cells, a human hepatoblastoma cell line. Phosphorylated in vitro by host protein kinase C or mitogen-activated protein kinase. N-acetylated in insect cells.

Its subcellular location is the host cytoplasm. The protein resides in the host nucleus. It is found in the host mitochondrion. Multifunctional protein that plays a role in silencing host antiviral defenses and promoting viral transcription. Does not seem to be essential for HBV infection. May be directly involved in development of cirrhosis and liver cancer (hepatocellular carcinoma). Most of cytosolic activities involve modulation of cytosolic calcium. The effect on apoptosis is controversial depending on the cell types in which the studies have been conducted. May induce apoptosis by localizing in mitochondria and causing loss of mitochondrial membrane potential. May also modulate apoptosis by binding host CFLAR, a key regulator of the death-inducing signaling complex (DISC). Promotes viral transcription by using the host E3 ubiquitin ligase DDB1 to target the SMC5-SMC6 complex to proteasomal degradation. This host complex would otherwise bind to viral episomal DNA, and prevents its transcription. Moderately stimulates transcription of many different viral and cellular transcription elements. Promoters and enhancers stimulated by HBx contain DNA binding sites for NF-kappa-B, AP-1, AP-2, c-EBP, ATF/CREB, or the calcium-activated factor NF-AT. This chain is Protein X, found in Homo sapiens (Human).